The following is a 633-amino-acid chain: Probable extracellular metalloproteinase 5 (633 aa).

The first 20 residues, 1 to 20 (MHGLLLAAAGLLSLPLHVLA), serve as a signal peptide directing secretion. Positions 21–244 (HPQPSTNLAG…VHNVVDYVSH (224 aa)) are excised as a propeptide. Asparagine 285 is a glycosylation site (N-linked (GlcNAc...) asparagine). Histidine 428 contributes to the Zn(2+) binding site. Glutamate 429 is a catalytic residue. Histidine 432 serves as a coordination point for Zn(2+). Asparagine 592 and asparagine 621 each carry an N-linked (GlcNAc...) asparagine glycan.

Belongs to the peptidase M36 family. Zn(2+) is required as a cofactor.

It localises to the secreted. In terms of biological role, secreted metalloproteinase probably acting as a virulence factor. This chain is Probable extracellular metalloproteinase 5 (MEP5), found in Arthroderma benhamiae (strain ATCC MYA-4681 / CBS 112371) (Trichophyton mentagrophytes).